Here is a 286-residue protein sequence, read N- to C-terminus: ATP synthase gamma chain (286 aa).

This sequence belongs to the ATPase gamma chain family. F-type ATPases have 2 components, CF(1) - the catalytic core - and CF(0) - the membrane proton channel. CF(1) has five subunits: alpha(3), beta(3), gamma(1), delta(1), epsilon(1). CF(0) has three main subunits: a, b and c.

Its subcellular location is the cell membrane. Functionally, produces ATP from ADP in the presence of a proton gradient across the membrane. The gamma chain is believed to be important in regulating ATPase activity and the flow of protons through the CF(0) complex. The polypeptide is ATP synthase gamma chain (Malacoplasma penetrans (strain HF-2) (Mycoplasma penetrans)).